A 253-amino-acid polypeptide reads, in one-letter code: Imidazole glycerol phosphate synthase subunit HisF (253 aa).

Active-site residues include D11 and D130.

Belongs to the HisA/HisF family. In terms of assembly, heterodimer of HisH and HisF.

It is found in the cytoplasm. The catalysed reaction is 5-[(5-phospho-1-deoxy-D-ribulos-1-ylimino)methylamino]-1-(5-phospho-beta-D-ribosyl)imidazole-4-carboxamide + L-glutamine = D-erythro-1-(imidazol-4-yl)glycerol 3-phosphate + 5-amino-1-(5-phospho-beta-D-ribosyl)imidazole-4-carboxamide + L-glutamate + H(+). Its pathway is amino-acid biosynthesis; L-histidine biosynthesis; L-histidine from 5-phospho-alpha-D-ribose 1-diphosphate: step 5/9. Its function is as follows. IGPS catalyzes the conversion of PRFAR and glutamine to IGP, AICAR and glutamate. The HisF subunit catalyzes the cyclization activity that produces IGP and AICAR from PRFAR using the ammonia provided by the HisH subunit. In Ruegeria pomeroyi (strain ATCC 700808 / DSM 15171 / DSS-3) (Silicibacter pomeroyi), this protein is Imidazole glycerol phosphate synthase subunit HisF.